Consider the following 231-residue polypeptide: 5'-methylthioadenosine/S-adenosylhomocysteine nucleosidase (231 aa).

E12 (proton acceptor) is an active-site residue. Substrate contacts are provided by residues G78, V153, and 174–175 (ME). D198 (proton donor) is an active-site residue.

It belongs to the PNP/UDP phosphorylase family. MtnN subfamily.

The catalysed reaction is S-adenosyl-L-homocysteine + H2O = S-(5-deoxy-D-ribos-5-yl)-L-homocysteine + adenine. It catalyses the reaction S-methyl-5'-thioadenosine + H2O = 5-(methylsulfanyl)-D-ribose + adenine. The enzyme catalyses 5'-deoxyadenosine + H2O = 5-deoxy-D-ribose + adenine. It functions in the pathway amino-acid biosynthesis; L-methionine biosynthesis via salvage pathway; S-methyl-5-thio-alpha-D-ribose 1-phosphate from S-methyl-5'-thioadenosine (hydrolase route): step 1/2. Functionally, catalyzes the irreversible cleavage of the glycosidic bond in both 5'-methylthioadenosine (MTA) and S-adenosylhomocysteine (SAH/AdoHcy) to adenine and the corresponding thioribose, 5'-methylthioribose and S-ribosylhomocysteine, respectively. Also cleaves 5'-deoxyadenosine, a toxic by-product of radical S-adenosylmethionine (SAM) enzymes, into 5-deoxyribose and adenine. The chain is 5'-methylthioadenosine/S-adenosylhomocysteine nucleosidase from Vibrio parahaemolyticus serotype O3:K6 (strain RIMD 2210633).